The primary structure comprises 414 residues: STAGA complex 65 subunit gamma (414 aa).

A disordered region spans residues 87–108; the sequence is NQQQTEGVKTEESEPLPSCPGS. At serine 108 the chain carries Phosphoserine. Residue lysine 271 forms a Glycyl lysine isopeptide (Lys-Gly) (interchain with G-Cter in SUMO2) linkage. 2 positions are modified to phosphoserine: serine 323 and serine 334. The tract at residues 346–414 is disordered; the sequence is PQESEEGNVS…QRCKKRMRKI (69 aa). The segment covering 386–395 has biased composition (low complexity); it reads SSYGSHSTDS.

In terms of assembly, component of the STAGA transcription coactivator-HAT complex, at least composed of SUPT3H, SUPT7L, GCN5L2, TAF5L, TAF6L, TADA3L, TAD1L, TAF10, TAF12 and TAF9. Post-translationally, sumoylated. As to expression, expressed at high levels in adenocarcinomas and gliomas and low in esophageal cancers and malignant hematological disease. Also expressed at high level in the thymus, low in peripheral blood mononuclear cells, and lowest in the stomach, small intestine, and skeletal muscle.

It localises to the nucleus. In Homo sapiens (Human), this protein is STAGA complex 65 subunit gamma (SUPT7L).